We begin with the raw amino-acid sequence, 387 residues long: 17-beta-hydroxysteroid dehydrogenase type 2 (387 aa).

Residues 4–24 (FFSDTAWICLAVPTVLCGTVF) form a helical; Signal-anchor for type II membrane protein membrane-spanning segment. Position 82–111 (82–111 (QKAVLVTGGDCGLGHALCKYLDELGFTVFA)) interacts with NAD(+). S219 contributes to the substrate binding site. The active site involves Y232.

This sequence belongs to the short-chain dehydrogenases/reductases (SDR) family. In terms of assembly, homodimer. As to expression, expressed in placenta.

The protein resides in the endoplasmic reticulum membrane. It catalyses the reaction 17beta-estradiol + NAD(+) = estrone + NADH + H(+). The catalysed reaction is testosterone + NAD(+) = androst-4-ene-3,17-dione + NADH + H(+). The enzyme catalyses 17beta-hydroxy-5alpha-androstan-3-one + NAD(+) = 5alpha-androstan-3,17-dione + NADH + H(+). It carries out the reaction (20S)-hydroxypregn-4-en-3-one + NAD(+) = progesterone + NADH + H(+). Its function is as follows. Catalyzes the NAD-dependent oxidation of the highly active 17beta-hydroxysteroids, such as estradiol (E2), testosterone (T), and dihydrotestosterone (DHT), to their less active forms and thus regulates the biological potency of these steroids. Oxidizes estradiol to estrone, testosterone to androstenedione, and dihydrotestosterone to 5alpha-androstan-3,17-dione. Also has 20-alpha-HSD activity. The protein is 17-beta-hydroxysteroid dehydrogenase type 2 of Homo sapiens (Human).